The primary structure comprises 282 residues: 4-diphosphocytidyl-2-C-methyl-D-erythritol kinase (282 aa).

K8 is an active-site residue. Residue 91-101 participates in ATP binding; the sequence is PVAAGLAGGST. Residue D133 is part of the active site.

The protein belongs to the GHMP kinase family. IspE subfamily.

The enzyme catalyses 4-CDP-2-C-methyl-D-erythritol + ATP = 4-CDP-2-C-methyl-D-erythritol 2-phosphate + ADP + H(+). Its pathway is isoprenoid biosynthesis; isopentenyl diphosphate biosynthesis via DXP pathway; isopentenyl diphosphate from 1-deoxy-D-xylulose 5-phosphate: step 3/6. Functionally, catalyzes the phosphorylation of the position 2 hydroxy group of 4-diphosphocytidyl-2C-methyl-D-erythritol. In Symbiobacterium thermophilum (strain DSM 24528 / JCM 14929 / IAM 14863 / T), this protein is 4-diphosphocytidyl-2-C-methyl-D-erythritol kinase.